We begin with the raw amino-acid sequence, 360 residues long: Protein RecA (360 aa).

64–71 (GHESSGKT) contributes to the ATP binding site. The interval 333-360 (QEQVQPEPKSKQSKSKQASEQATQDELI) is disordered.

Belongs to the RecA family.

The protein localises to the cytoplasm. In terms of biological role, can catalyze the hydrolysis of ATP in the presence of single-stranded DNA, the ATP-dependent uptake of single-stranded DNA by duplex DNA, and the ATP-dependent hybridization of homologous single-stranded DNAs. It interacts with LexA causing its activation and leading to its autocatalytic cleavage. The sequence is that of Protein RecA from Francisella philomiragia subsp. philomiragia (strain ATCC 25017 / CCUG 19701 / FSC 153 / O#319-036).